The sequence spans 149 residues: Protein FAM72C (149 aa).

This sequence belongs to the FAM72 family.

The chain is Protein FAM72C (FAM72C) from Homo sapiens (Human).